The sequence spans 249 residues: Proteasome activator complex subunit 1 (249 aa).

The interval 60-102 (PLDIPVPDPVKEKEKEERKKQQEKEDKDEKKKGEDEDKGPPCG) is disordered. A compositionally biased stretch (basic and acidic residues) spans 68-98 (PVKEKEKEERKKQQEKEDKDEKKKGEDEDKG).

Belongs to the PA28 family. As to quaternary structure, heterodimer of PSME1 and PSME2, which forms a hexameric ring. PSME1 can form homoheptamers.

Functionally, implicated in immunoproteasome assembly and required for efficient antigen processing. The PA28 activator complex enhances the generation of class I binding peptides by altering the cleavage pattern of the proteasome. This is Proteasome activator complex subunit 1 (PSME1) from Sus scrofa (Pig).